A 647-amino-acid chain; its full sequence is MLWCPSVLVPLIAVAACLPVLAIGTPLEWEFAITLKSKILFVDEFWRTLASAAHEFDELSALTFDETEELIYFNDQQHRNGSIFSLRRDALMASHIAEQAIQRTGNESVGGLAYDPLNRNLFWSDTLQKKIFFASIDSKVTETPKVLVDLSQEGARPDGVAVDVCRRKLYWTNSNITHPTVESIDLAGTNRQVIIDTDIDMPRGIVVDQLSDRIFWIDDLKGVFFALKSARLDGSDRQLVLHDKHHEPLNLAVTNDAIYWTDKTTKAVWSHPKVPIVKATTTTSPLKAEEEDATETIPDIEPEPVAEVSALLRVANLSEEARGIVARTGFYQRLQKDEHCANIVRKVKERLDLMTKKKQMRSLVDEKTAQLERDHCLNGGTYIADRVLCICPTGFKGSRCEIRECHNFCVHGTCEISDRAYPKCYCQPGFSGERCEISKCSGLCLNGGHCKLEDISEKPSCECPHNFAGERCEQNSTEICALFCRLLKHEADIYVPFGCHDICEELAKDASDKIAIPQYHHLEVCMTPSPWTSNVIIVLVLGIVSCFFLVAVIVHGFRRLYKPKRPRIRKTFVVRKQARTNSSGDTPLTNRPLATEQCEITIENCCNMNICETPCFDPKLVEQTLAKSSNCKEDKKILIHNMDDDLY.

The N-terminal stretch at 1–22 (MLWCPSVLVPLIAVAACLPVLA) is a signal peptide. At 23–534 (IGTPLEWEFA…CMTPSPWTSN (512 aa)) the chain is on the extracellular side. N-linked (GlcNAc...) asparagine glycosylation is found at Asn80 and Asn106. LDL-receptor class B repeat units lie at residues 119–166 (RNLF…DVCR), 167–211 (RKLY…DQLS), and 212–257 (DRIF…TNDA). Asn175 is a glycosylation site (N-linked (GlcNAc...) asparagine). Asn316 carries an N-linked (GlcNAc...) asparagine glycan. EGF-like domains lie at 365–401 (DEKTAQLERDHCLNGGTYIADRVLCICPTGFKGSRCE) and 436–473 (EISKCSGLCLNGGHCKLEDISEKPSCECPHNFAGERCE). Intrachain disulfides connect Cys376/Cys389, Cys391/Cys400, Cys440/Cys450, Cys444/Cys461, and Cys463/Cys472. The N-linked (GlcNAc...) asparagine glycan is linked to Asn475. Residues 535 to 555 (VIIVLVLGIVSCFFLVAVIVH) form a helical membrane-spanning segment. Topologically, residues 556–647 (GFRRLYKPKR…LIHNMDDDLY (92 aa)) are cytoplasmic.

This sequence belongs to the cueball family.

Its subcellular location is the cell membrane. Its function is as follows. Has a role in spermatogenesis and oogenesis. The chain is Protein cueball from Drosophila pseudoobscura pseudoobscura (Fruit fly).